The following is a 142-amino-acid chain: Salivary protein 15a (142 aa).

The N-terminal stretch at 1–20 (MKYLGLALISAVFLIGACQA) is a signal peptide. Intrachain disulfides connect cysteine 27–cysteine 44, cysteine 40–cysteine 108, and cysteine 91–cysteine 117.

The protein belongs to the PBP/GOBP family. Female salivary gland (at protein level).

It is found in the secreted. Its function is as follows. Inhibits contact coagulation pathway activation in the host by sequestering anionic polymers, such as polyphosphate and dextran sulfate, and thus blocking interaction of protein components of the pathway with negatively charged surfaces. Inhibits dextran sulfate-mediated autoactivation of host coagulation factor XII (F12). Inhibits dextran sulfate-mediated autoactivation of host factor XI (F11). Inhibits polyphosphate-mediated activation of host F11 by thrombin (F2). May inhibit dextran sulfate-mediated bradykinin generation in host plasma. The polypeptide is Salivary protein 15a (Phlebotomus duboscqi (Sandfly)).